The sequence spans 559 residues: Sesquiterpene synthase TPS3 (559 aa).

(2E,6E)-farnesyl diphosphate-binding residues include Arg275, Asp312, Asp316, Arg453, and Asp456. 2 residues coordinate Mg(2+): Asp312 and Asp316. A DDXXD motif motif is present at residues 312-316 (DDTYD). 3 residues coordinate Mg(2+): Asp456, Thr460, and Glu464.

This sequence belongs to the terpene synthase family. Tpsa subfamily. In terms of assembly, monomer. It depends on Mg(2+) as a cofactor. As to expression, highly expressed in glandular trichomes. Expressed in roots and leaves.

It is found in the cytoplasm. The catalysed reaction is (2E,6E)-farnesyl diphosphate = (+)-(R)-germacrene A + diphosphate. Its pathway is secondary metabolite biosynthesis; terpenoid biosynthesis. Sesquiterpene synthase involved in the biosynthesis of volatile compounds. Mediates the conversion of (2E,6E)-farnesyl diphosphate (FPP) into (+)-(R)-germacrene A. In Xanthium strumarium (Rough cocklebur), this protein is Sesquiterpene synthase TPS3.